A 361-amino-acid chain; its full sequence is Phospho-N-acetylmuramoyl-pentapeptide-transferase (361 aa).

The next 10 helical transmembrane spans lie at 21–41 (YLTI…LMLG), 69–89 (VGTP…SILI), 93–113 (WSNI…AIGF), 131–151 (SIKF…IILI), 168–188 (IILP…IVGS), 200–220 (GLAI…AYFS), 240–260 (LFII…FNAY), 264–284 (IFMG…IAIL), 289–309 (ILLF…IIQV), and 338–358 (KIIV…LASI).

The protein belongs to the glycosyltransferase 4 family. MraY subfamily. Mg(2+) is required as a cofactor.

The protein localises to the cell inner membrane. The enzyme catalyses UDP-N-acetyl-alpha-D-muramoyl-L-alanyl-gamma-D-glutamyl-meso-2,6-diaminopimeloyl-D-alanyl-D-alanine + di-trans,octa-cis-undecaprenyl phosphate = di-trans,octa-cis-undecaprenyl diphospho-N-acetyl-alpha-D-muramoyl-L-alanyl-D-glutamyl-meso-2,6-diaminopimeloyl-D-alanyl-D-alanine + UMP. It participates in cell wall biogenesis; peptidoglycan biosynthesis. Its function is as follows. Catalyzes the initial step of the lipid cycle reactions in the biosynthesis of the cell wall peptidoglycan: transfers peptidoglycan precursor phospho-MurNAc-pentapeptide from UDP-MurNAc-pentapeptide onto the lipid carrier undecaprenyl phosphate, yielding undecaprenyl-pyrophosphoryl-MurNAc-pentapeptide, known as lipid I. This chain is Phospho-N-acetylmuramoyl-pentapeptide-transferase, found in Vesicomyosocius okutanii subsp. Calyptogena okutanii (strain HA).